The primary structure comprises 673 residues: UvrABC system protein B (673 aa).

In terms of domain architecture, Helicase ATP-binding spans 26–183; sequence EGLEDGLAHQ…RRLAELQYTR (158 aa). Residue 39–46 coordinates ATP; the sequence is GVTGSGKT. Positions 92–115 match the Beta-hairpin motif; it reads YYDYYQPEAYVPSSDTFIEKDASV. The 167-residue stretch at 431 to 597 folds into the Helicase C-terminal domain; the sequence is QVDDLLSEIR…GLNKKVVDIL (167 aa). In terms of domain architecture, UVR spans 633–668; the sequence is QQKIHELEGQMMQHAQNLEFEEAAEIRDQLHQLREL.

Belongs to the UvrB family. As to quaternary structure, forms a heterotetramer with UvrA during the search for lesions. Interacts with UvrC in an incision complex.

Its subcellular location is the cytoplasm. The UvrABC repair system catalyzes the recognition and processing of DNA lesions. A damage recognition complex composed of 2 UvrA and 2 UvrB subunits scans DNA for abnormalities. Upon binding of the UvrA(2)B(2) complex to a putative damaged site, the DNA wraps around one UvrB monomer. DNA wrap is dependent on ATP binding by UvrB and probably causes local melting of the DNA helix, facilitating insertion of UvrB beta-hairpin between the DNA strands. Then UvrB probes one DNA strand for the presence of a lesion. If a lesion is found the UvrA subunits dissociate and the UvrB-DNA preincision complex is formed. This complex is subsequently bound by UvrC and the second UvrB is released. If no lesion is found, the DNA wraps around the other UvrB subunit that will check the other stand for damage. The chain is UvrABC system protein B from Citrobacter koseri (strain ATCC BAA-895 / CDC 4225-83 / SGSC4696).